We begin with the raw amino-acid sequence, 168 residues long: CDP-archaeol synthase (168 aa).

A run of 5 helical transmembrane segments spans residues 4–24, 51–71, 81–101, 112–132, and 138–158; these read IFEA…PVVL, GFFG…LMFP, VGVA…GSFI, PAVG…AYPL, and GEVL…NVFA.

It belongs to the CDP-archaeol synthase family. The cofactor is Mg(2+).

The protein localises to the cell membrane. The catalysed reaction is 2,3-bis-O-(geranylgeranyl)-sn-glycerol 1-phosphate + CTP + H(+) = CDP-2,3-bis-O-(geranylgeranyl)-sn-glycerol + diphosphate. It participates in membrane lipid metabolism; glycerophospholipid metabolism. Its function is as follows. Catalyzes the formation of CDP-2,3-bis-(O-geranylgeranyl)-sn-glycerol (CDP-archaeol) from 2,3-bis-(O-geranylgeranyl)-sn-glycerol 1-phosphate (DGGGP) and CTP. This reaction is the third ether-bond-formation step in the biosynthesis of archaeal membrane lipids. This is CDP-archaeol synthase from Pyrococcus abyssi (strain GE5 / Orsay).